The chain runs to 395 residues: uncharacterized protein (395 aa).

12 consecutive transmembrane segments (helical) span residues 12–34, 44–66, 75–94, 99–121, 134–156, 160–182, 208–230, 245–264, 271–293, 298–320, 341–360, and 364–381; these read LLAS…TIYL, LIGY…FGIL, YMLL…TLVN, VVLF…KAWF, FSIN…TLLV, INLP…QIWV, LLWF…SCIS, VVAV…QYSV, ANIR…GFIF, LLLW…PGEY, LGWL…LTSL, and SLFV…VLML.

It belongs to the major facilitator superfamily.

The protein localises to the cell inner membrane. A transporter able to export peptides. When overexpressed, allows cells deleted for multiple peptidases (pepA, pepB, pepD and pepN) to grow in the presence of dipeptides Ala-Gln or Gly-Tyr which otherwise inhibit growth. Cells overexpressing this protein have decreased intracellular levels of Ala-Gln dipeptide, and in a system that produces the Ala-Gln dipeptide overproduction of this protein increases export of the dipeptide. This is an uncharacterized protein from Escherichia coli (strain K12).